Consider the following 72-residue polypeptide: Probable transcription factor elt-4 (72 aa).

The segment at 16-40 (CSNCNGTNTTLWRRKAEGDPVCNAC) adopts a GATA-type zinc-finger fold.

Its subcellular location is the nucleus. In terms of biological role, probable transcription factor. Plays a role in regulating heme-dependent expression of heme transporter hrg-1. Modulates lifespan in a daf-16-dependent manner. The protein is Probable transcription factor elt-4 of Caenorhabditis elegans.